We begin with the raw amino-acid sequence, 201 residues long: Peroxiredoxin 2 (201 aa).

The Thioredoxin domain occupies V3–A156. The active-site Cysteine sulfenic acid (-SOH) intermediate is C44. Position 119 (R119) interacts with substrate.

This sequence belongs to the peroxiredoxin family. Prx6 subfamily. As to quaternary structure, homodecamer. Pentamer of dimers that assemble into a ring structure.

The protein resides in the cytoplasm. The enzyme catalyses a hydroperoxide + [thioredoxin]-dithiol = an alcohol + [thioredoxin]-disulfide + H2O. In terms of biological role, thiol-specific peroxidase that catalyzes the reduction of hydrogen peroxide and organic hydroperoxides to water and alcohols, respectively. Plays a role in cell protection against oxidative stress by detoxifying peroxides. The chain is Peroxiredoxin 2 from Picrophilus torridus (strain ATCC 700027 / DSM 9790 / JCM 10055 / NBRC 100828 / KAW 2/3).